We begin with the raw amino-acid sequence, 288 residues long: Pantothenate synthetase (288 aa).

Position 35 to 42 (35 to 42 (MGALHDGH)) interacts with ATP. His-42 serves as the catalytic Proton donor. Gln-66 lines the (R)-pantoate pocket. Gln-66 is a beta-alanine binding site. Residue 152–155 (GEKD) participates in ATP binding. Gln-158 contacts (R)-pantoate. ATP is bound by residues Gly-181 and 189 to 192 (LSSR).

This sequence belongs to the pantothenate synthetase family. As to quaternary structure, homodimer.

Its subcellular location is the cytoplasm. It catalyses the reaction (R)-pantoate + beta-alanine + ATP = (R)-pantothenate + AMP + diphosphate + H(+). It functions in the pathway cofactor biosynthesis; (R)-pantothenate biosynthesis; (R)-pantothenate from (R)-pantoate and beta-alanine: step 1/1. In terms of biological role, catalyzes the condensation of pantoate with beta-alanine in an ATP-dependent reaction via a pantoyl-adenylate intermediate. This chain is Pantothenate synthetase, found in Maricaulis maris (strain MCS10) (Caulobacter maris).